Reading from the N-terminus, the 738-residue chain is Junction plakoglobin (738 aa).

ARM repeat units follow at residues 128–167 (NYQDDAELATRAIPELTKLLNDEDPMVVNKASMIVNQLSK), 168–211 (KEAS…LSHH), 212–251 (REGLLSIFKSGGIPALVRMLSSPVESVLFYAITTLHNLLL), 254–293 (EGAKMAVRLADGLQKMVPLLNKNNPKFLAITTDCLQLLAY), 294–337 (GNQE…LSVC), 338–377 (PSNKPAIVEAGGMQALGKHLTSNSPRLVQNCLWTLRNLSD), 379–416 (ATKQEGLDNVLKILVNQLSSDDVNVLTCATGTLSNLTC), 419–460 (GRNK…HLTS), 466–506 (EVAQ…NLAL), 508–547 (PANHAPLYDAGVIPRLVQLLVKSHQDAQRHAASGTQQPYT), 570–609 (PVNRMDIYKLNTIPLFVQLLYSPVENIQRVSSGVLCELAQ), and 611–657 (KEAA…ADYR).

This sequence belongs to the beta-catenin family. As to quaternary structure, homodimer.

Its subcellular location is the cell junction. The protein localises to the adherens junction. The protein resides in the desmosome. It localises to the cytoplasm. It is found in the cytoskeleton. Its subcellular location is the membrane. In terms of biological role, common junctional plaque protein. The membrane-associated plaques are architectural elements in an important strategic position to influence the arrangement and function of both the cytoskeleton and the cells within the tissue. The presence of plakoglobin in both the desmosomes and in the intermediate junctions suggests that it plays a central role in the structure and function of submembranous plaques. This chain is Junction plakoglobin (jup), found in Xenopus laevis (African clawed frog).